The following is a 74-amino-acid chain: Translational regulator CsrA (74 aa).

This sequence belongs to the CsrA/RsmA family. As to quaternary structure, homodimer. The beta-strands of each monomer intercalate to form a hydrophobic core while the alpha-helices form wings that extend away from the core. Two molecules of FliW interact with 1 homodimer. mRNA and FliW bind to different sites on CsrA.

The protein resides in the cytoplasm. Functionally, a translational regulator that binds mRNA to regulate translation initiation and/or mRNA stability. Usually binds in the 5'-UTR at or near the Shine-Dalgarno sequence preventing ribosome-binding, thus repressing translation. Represses expression of flagellin (hag) in a post-transcriptional fashion. Specifically binds to 2 sites in the 5'-UTR of hag mRNA in a cooperative fashion; the second site overlaps the Shine-Dalgarno sequence and prevents 30S ribosomal subunit binding. Mutation of either binding site abolishes CsrA regulation of hag expression. Repression is greater in the 1A96 than 168 genetic background and higher in minimal than rich medium. Translation repression is antagonized by FliW. Partner switching by flagellin between FliW and CsrA provides a flagellar assembly checkpoint to tightly control the timing of flagellin synthesis. Flagellin binds to assembly factor FliW, freeing CsrA to repress translation of the flagellin mRNA. When the flagellar hook is assembled flagellin is secreted, depleting intracellular flagellin, which frees FliW to interact with CsrA and inhibits CsrA binding to mRNA. This derepresses flagellin translation and provides protein for flagellar assembly. Once the flagellar filament is completed cytoplasmic flagellin levels rise and CsrA translation repression of flagellin reinitiates. Overexpression leads to a dramatic reduction in motility, a significant reduction in flagellin synthesis and reduced flagella assembly. This is Translational regulator CsrA from Bacillus subtilis (strain 168).